The chain runs to 485 residues: NADH-quinone oxidoreductase subunit N (485 aa).

14 helical membrane passes run 8 to 28 (LIALLPLLIVGLTVVVVMLSI), 35 to 55 (FLNATLSVIGLNAALVSLWFV), 71 to 91 (GFAMLYTGLVLLASLATCTFA), 105 to 125 (FYLLVLIAALGGILLANANHL), 127 to 147 (SLFLGIELISLPLFGLVGYAF), 159 to 179 (YTILSAAASSFLLFGMALVYA), 203 to 223 (LLAGFGLMIVGLGFKLSLVPF), 235 to 255 (PAPVSTFLATASKIAIFGVVM), 271 to 291 (VVLAIIAFASIIFGNLMALSQ), 297 to 317 (LLGYSSISHLGYLLVALIALQ), 326 to 346 (VGVYLAGYLFSSLGAFGVVSL), 373 to 393 (AAVMTVMMLSLAGIPMTLGFI), 408 to 430 (WWLVGAVVVGSAIGLYYYLRVAV), and 455 to 475 (IVVLISALLVLVLGVWPQPLI).

This sequence belongs to the complex I subunit 2 family. In terms of assembly, NDH-1 is composed of 13 different subunits. Subunits NuoA, H, J, K, L, M, N constitute the membrane sector of the complex.

It is found in the cell inner membrane. It carries out the reaction a quinone + NADH + 5 H(+)(in) = a quinol + NAD(+) + 4 H(+)(out). Its function is as follows. NDH-1 shuttles electrons from NADH, via FMN and iron-sulfur (Fe-S) centers, to quinones in the respiratory chain. The immediate electron acceptor for the enzyme in this species is believed to be ubiquinone. Couples the redox reaction to proton translocation (for every two electrons transferred, four hydrogen ions are translocated across the cytoplasmic membrane), and thus conserves the redox energy in a proton gradient. In Escherichia coli O139:H28 (strain E24377A / ETEC), this protein is NADH-quinone oxidoreductase subunit N.